Here is a 500-residue protein sequence, read N- to C-terminus: NAD(P)H-quinone oxidoreductase chain 4, chloroplastic (500 aa).

A run of 14 helical transmembrane segments spans residues 4-24 (FPWLTIIVVFPILTGSLIFLL), 37-57 (LCICILELLLTTYTFCYHFQL), 87-107 (IGPILLTGFITTLATLAAWPV), 111-131 (AQLFHFLMLAMYSGQIGSFSS), 134-154 (LLLFFLMWEFELIPVYLLLSM), 167-187 (FILYTAGGSIFLLIGVLGIGL), 208-228 (ALEVIFYVGFLIAFAVKLPII), 242-262 (HYSTCMLLAGILLKMGAYGLV), 272-292 (AHCLFSPGLIIVGAIQIIYAA), 305-325 (IAYSSISHMGFIIIGIGSLSD), 330-350 (GAILQIISHGFIGAALFFLAG), 386-406 (LALPGLSGFVAELLVFFGIIT), 416-436 (ILIAFLMAIGMILTPIYSLSM), and 462-482 (LFVSISLLLPIIGIGIYPDFV).

Belongs to the complex I subunit 4 family.

The protein localises to the plastid. It localises to the chloroplast thylakoid membrane. It catalyses the reaction a plastoquinone + NADH + (n+1) H(+)(in) = a plastoquinol + NAD(+) + n H(+)(out). It carries out the reaction a plastoquinone + NADPH + (n+1) H(+)(in) = a plastoquinol + NADP(+) + n H(+)(out). The protein is NAD(P)H-quinone oxidoreductase chain 4, chloroplastic of Oenothera parviflora (Small-flowered evening primrose).